Consider the following 156-residue polypeptide: Small ribosomal subunit protein uS7 (156 aa).

It belongs to the universal ribosomal protein uS7 family. As to quaternary structure, part of the 30S ribosomal subunit. Contacts proteins S9 and S11.

Functionally, one of the primary rRNA binding proteins, it binds directly to 16S rRNA where it nucleates assembly of the head domain of the 30S subunit. Is located at the subunit interface close to the decoding center, probably blocks exit of the E-site tRNA. This is Small ribosomal subunit protein uS7 from Salmonella agona (strain SL483).